Here is a 1333-residue protein sequence, read N- to C-terminus: Vascular endothelial growth factor receptor 1 (1333 aa).

The first 22 residues, 1–22 (MVSCWDTAVLPYALLGCLLLTG), serve as a signal peptide directing secretion. At 23–759 (YGSGSKLKVP…QGTSDKSNLE (737 aa)) the chain is on the extracellular side. Ig-like C2-type domains are found at residues 32-124 (PELS…AESS), 152-215 (GRQL…VNGH), 231-328 (LDVQ…TSVH), 334-429 (FISV…NVKP), 430-550 (QIYE…RNIK), 557-656 (PNGF…EVLV), and 662-748 (PHLL…AYLT). 2 cysteine pairs are disulfide-bonded: C53/C108 and C159/C208. N-linked (GlcNAc...) asparagine glycans are attached at residues N101, N165, N197, and N252. The cysteines at positions 253 and 312 are disulfide-linked. N-linked (GlcNAc...) asparagine glycosylation is found at N324, N418, N475, N517, N598, N626, N667, and N714. 2 disulfides stabilise this stretch: C455-C536 and C578-C637. Cysteines 683 and 732 form a disulfide. A helical transmembrane segment spans residues 760-781 (LITLTCTCVAATLFWLLLTLFI). Residues 782-1333 (RKLKRSSSEV…SVVLYSSPPA (552 aa)) are Cytoplasmic-facing. Positions 828-1158 (LKLGKSLGRG…ELVEKLGDLL (331 aa)) constitute a Protein kinase domain. Residues 834–842 (LGRGAFGKV) and K862 each bind ATP. Phosphotyrosine; by autocatalysis is present on Y915. Residues 947 to 983 (EPGLEQGQKPRLDSVSSSSVTSSSFPEDRSVSDVEGD) are disordered. A compositionally biased stretch (low complexity) spans 960–970 (SVSSSSVTSSS). D1022 functions as the Proton acceptor in the catalytic mechanism. Y1053, Y1169, Y1213, Y1242, Y1322, and Y1328 each carry phosphotyrosine; by autocatalysis.

It belongs to the protein kinase superfamily. Tyr protein kinase family. CSF-1/PDGF receptor subfamily. As to quaternary structure, interacts with VEGFA, VEGFB and PGF. Monomer in the absence of bound VEGFA, VEGFB or PGF. Homodimer in the presence of bound VEGFA, VEGFB and PGF. Can also form a heterodimer with KDR. Interacts (tyrosine phosphorylated) with CBL, CRK, GRB2, NCK1, PIK3R1, PLCG, PSEN1 and PTPN11. Probably interacts with PTPRB. Interacts with RACK1. Identified in a complex with CBL and CD2AP. In terms of processing, N-glycosylated. Ubiquitinated after VEGFA-mediated autophosphorylation, leading to proteolytic degradation. Post-translationally, autophosphorylated on tyrosine residues upon ligand binding. Autophosphorylation occurs in trans, i.e. one subunit of the dimeric receptor phosphorylates tyrosine residues on the other subunit. Phosphorylation at Tyr-1169 is important for interaction with PLCG. Phosphorylation at Tyr-1213 is important for interaction with PIK3R1, PTPN11, GRB2, and PLCG. Phosphorylation at Tyr-1328 is important for endocytosis and for interaction with CBL, NCK1 and CRK. Is probably dephosphorylated by PTPRB.

The protein resides in the cell membrane. It localises to the endosome. The enzyme catalyses L-tyrosyl-[protein] + ATP = O-phospho-L-tyrosyl-[protein] + ADP + H(+). With respect to regulation, present in an inactive conformation in the absence of bound ligand. Binding of VEGFA, VEGFB or PGF leads to dimerization and activation by autophosphorylation on tyrosine residues. In terms of biological role, tyrosine-protein kinase that acts as a cell-surface receptor for VEGFA, VEGFB and PGF, and plays an essential role in the development of embryonic vasculature, the regulation of angiogenesis, cell survival, cell migration, macrophage function, chemotaxis, and cancer cell invasion. Acts as a positive regulator of postnatal retinal hyaloid vessel regression. May play an essential role as a negative regulator of embryonic angiogenesis by inhibiting excessive proliferation of endothelial cells. Can promote endothelial cell proliferation, survival and angiogenesis in adulthood. Its function in promoting cell proliferation seems to be cell-type specific. Promotes PGF-mediated proliferation of endothelial cells, and proliferation of some types of cancer cells, but does not promote proliferation of normal fibroblasts. Has very high affinity for VEGFA and relatively low protein kinase activity; may function as a negative regulator of VEGFA signaling by limiting the amount of free VEGFA and preventing its binding to KDR. Modulates KDR signaling by forming heterodimers with KDR. Ligand binding leads to the activation of several signaling cascades. Activation of PLCG leads to the production of the cellular signaling molecules diacylglycerol and inositol 1,4,5-trisphosphate and the activation of protein kinase C. Mediates phosphorylation of PIK3R1, the regulatory subunit of phosphatidylinositol 3-kinase, leading to the activation of phosphatidylinositol kinase and the downstream signaling pathway. Mediates activation of MAPK1/ERK2, MAPK3/ERK1 and the MAP kinase signaling pathway, as well as of the AKT1 signaling pathway. Phosphorylates SRC, YES1 and PLCG, and may also phosphorylate CBL. Promotes phosphorylation of AKT1 and PTK2/FAK1. In Mus musculus (Mouse), this protein is Vascular endothelial growth factor receptor 1 (Flt1).